The chain runs to 386 residues: Succinate--CoA ligase [ADP-forming] subunit beta (386 aa).

The ATP-grasp domain maps to 9 to 244 (KELLKQFGVP…LDEEDPAEIE (236 aa)). ATP contacts are provided by residues Lys-46, 53–55 (GRG), Glu-99, Ala-102, and Glu-107. Positions 199 and 213 each coordinate Mg(2+). Substrate-binding positions include Asn-264 and 321–323 (GIM).

This sequence belongs to the succinate/malate CoA ligase beta subunit family. Heterotetramer of two alpha and two beta subunits. Mg(2+) is required as a cofactor.

The catalysed reaction is succinate + ATP + CoA = succinyl-CoA + ADP + phosphate. The enzyme catalyses GTP + succinate + CoA = succinyl-CoA + GDP + phosphate. Its pathway is carbohydrate metabolism; tricarboxylic acid cycle; succinate from succinyl-CoA (ligase route): step 1/1. Succinyl-CoA synthetase functions in the citric acid cycle (TCA), coupling the hydrolysis of succinyl-CoA to the synthesis of either ATP or GTP and thus represents the only step of substrate-level phosphorylation in the TCA. The beta subunit provides nucleotide specificity of the enzyme and binds the substrate succinate, while the binding sites for coenzyme A and phosphate are found in the alpha subunit. This chain is Succinate--CoA ligase [ADP-forming] subunit beta, found in Bordetella petrii (strain ATCC BAA-461 / DSM 12804 / CCUG 43448).